A 276-amino-acid polypeptide reads, in one-letter code: Phosphate import ATP-binding protein PstB 2 (276 aa).

Residues 22-262 (MAAVNLTLGF…PKHAETARYV (241 aa)) enclose the ABC transporter domain. 54–61 (GPTGSGKT) provides a ligand contact to ATP.

This sequence belongs to the ABC transporter superfamily. Phosphate importer (TC 3.A.1.7) family. The complex is composed of two ATP-binding proteins (PstB), two transmembrane proteins (PstC and PstA) and a solute-binding protein (PstS).

The protein resides in the cell membrane. The catalysed reaction is phosphate(out) + ATP + H2O = ADP + 2 phosphate(in) + H(+). Part of the ABC transporter complex PstSACB involved in phosphate import. Responsible for energy coupling to the transport system. The protein is Phosphate import ATP-binding protein PstB 2 of Mycobacterium bovis (strain ATCC BAA-935 / AF2122/97).